Here is a 156-residue protein sequence, read N- to C-terminus: MKKVRLTREGYEKLKKELEDLKRKFMYEISERIKEARELGDLSENSEYEAAKNEQGRVGSRIMEIEQILSNAEIIEDSEENDEITLGKWVVIRNLDTGEEHKFRIVTPQEADFFAQKLSSDSPLGKSLLGRKVGDVVKVKAPSGVQRYQVIAVMNK.

Residues 1–32 (MKKVRLTREGYEKLKKELEDLKRKFMYEISER) adopt a coiled-coil conformation.

Belongs to the GreA/GreB family.

In terms of biological role, necessary for efficient RNA polymerase transcription elongation past template-encoded arresting sites. The arresting sites in DNA have the property of trapping a certain fraction of elongating RNA polymerases that pass through, resulting in locked ternary complexes. Cleavage of the nascent transcript by cleavage factors such as GreA or GreB allows the resumption of elongation from the new 3'terminus. GreA releases sequences of 2 to 3 nucleotides. The protein is Transcription elongation factor GreA of Thermotoga sp. (strain RQ2).